Consider the following 314-residue polypeptide: tRNA uridine(34) hydroxylase (314 aa).

Positions 135 to 229 constitute a Rhodanese domain; that stretch reads SDPDTIVIDT…YLEEVPEEES (95 aa). The active-site Cysteine persulfide intermediate is the C189.

This sequence belongs to the TrhO family.

The catalysed reaction is uridine(34) in tRNA + AH2 + O2 = 5-hydroxyuridine(34) in tRNA + A + H2O. Catalyzes oxygen-dependent 5-hydroxyuridine (ho5U) modification at position 34 in tRNAs. The chain is tRNA uridine(34) hydroxylase from Agrobacterium fabrum (strain C58 / ATCC 33970) (Agrobacterium tumefaciens (strain C58)).